The sequence spans 227 residues: Cytochrome c oxidase subunit 2 (227 aa).

Over 1 to 14 the chain is Mitochondrial intermembrane; the sequence is MAYPFQLGFQDATS. A helical transmembrane segment spans residues 15 to 45; it reads PIMEELLHFHDHTLMIVFLISSLVLYIISSM. The Mitochondrial matrix segment spans residues 46–59; it reads LTTKLTHTSTMDAQ. A helical membrane pass occupies residues 60-87; it reads EVETIWTILPAIILILIALPSLRILYMM. Residues 88–227 lie on the Mitochondrial intermembrane side of the membrane; the sequence is DEINNPSLTV…HFEEWSASML (140 aa). Residues His161, Cys196, Glu198, Cys200, His204, and Met207 each coordinate Cu cation. Glu198 is a binding site for Mg(2+).

The protein belongs to the cytochrome c oxidase subunit 2 family. As to quaternary structure, component of the cytochrome c oxidase (complex IV, CIV), a multisubunit enzyme composed of 14 subunits. The complex is composed of a catalytic core of 3 subunits MT-CO1, MT-CO2 and MT-CO3, encoded in the mitochondrial DNA, and 11 supernumerary subunits COX4I, COX5A, COX5B, COX6A, COX6B, COX6C, COX7A, COX7B, COX7C, COX8 and NDUFA4, which are encoded in the nuclear genome. The complex exists as a monomer or a dimer and forms supercomplexes (SCs) in the inner mitochondrial membrane with NADH-ubiquinone oxidoreductase (complex I, CI) and ubiquinol-cytochrome c oxidoreductase (cytochrome b-c1 complex, complex III, CIII), resulting in different assemblies (supercomplex SCI(1)III(2)IV(1) and megacomplex MCI(2)III(2)IV(2)). Found in a complex with TMEM177, COA6, COX18, COX20, SCO1 and SCO2. Interacts with TMEM177 in a COX20-dependent manner. Interacts with COX20. Interacts with COX16. Requires Cu cation as cofactor.

The protein resides in the mitochondrion inner membrane. The catalysed reaction is 4 Fe(II)-[cytochrome c] + O2 + 8 H(+)(in) = 4 Fe(III)-[cytochrome c] + 2 H2O + 4 H(+)(out). Its function is as follows. Component of the cytochrome c oxidase, the last enzyme in the mitochondrial electron transport chain which drives oxidative phosphorylation. The respiratory chain contains 3 multisubunit complexes succinate dehydrogenase (complex II, CII), ubiquinol-cytochrome c oxidoreductase (cytochrome b-c1 complex, complex III, CIII) and cytochrome c oxidase (complex IV, CIV), that cooperate to transfer electrons derived from NADH and succinate to molecular oxygen, creating an electrochemical gradient over the inner membrane that drives transmembrane transport and the ATP synthase. Cytochrome c oxidase is the component of the respiratory chain that catalyzes the reduction of oxygen to water. Electrons originating from reduced cytochrome c in the intermembrane space (IMS) are transferred via the dinuclear copper A center (CU(A)) of subunit 2 and heme A of subunit 1 to the active site in subunit 1, a binuclear center (BNC) formed by heme A3 and copper B (CU(B)). The BNC reduces molecular oxygen to 2 water molecules using 4 electrons from cytochrome c in the IMS and 4 protons from the mitochondrial matrix. The chain is Cytochrome c oxidase subunit 2 (MT-CO2) from Equus caballus (Horse).